The chain runs to 419 residues: L-rhamnose isomerase (419 aa).

The Mn(2+) site is built by His-262, Asp-294, and Asp-296.

This sequence belongs to the rhamnose isomerase family. In terms of assembly, homotetramer. Mn(2+) serves as cofactor.

Its subcellular location is the cytoplasm. The catalysed reaction is L-rhamnopyranose = L-rhamnulose. It functions in the pathway carbohydrate degradation; L-rhamnose degradation; glycerone phosphate from L-rhamnose: step 1/3. In terms of biological role, catalyzes the interconversion of L-rhamnose and L-rhamnulose. This chain is L-rhamnose isomerase, found in Escherichia coli (strain SMS-3-5 / SECEC).